The chain runs to 331 residues: Ketol-acid reductoisomerase (NADP(+)) (331 aa).

One can recognise a KARI N-terminal Rossmann domain in the interval 2 to 182; sequence ARMYYDEDAN…GGTRGGVLET (181 aa). Residues 25-28, serine 51, serine 53, and 83-86 each bind NADP(+); these read YGSQ and DEVQ. Histidine 108 is an active-site residue. Glycine 134 provides a ligand contact to NADP(+). A KARI C-terminal knotted domain is found at 183-328; the sequence is TFREETETDL…KDLRAMFSWL (146 aa). Residues aspartate 191, glutamate 195, glutamate 227, and glutamate 231 each contribute to the Mg(2+) site. Residue serine 252 participates in substrate binding.

This sequence belongs to the ketol-acid reductoisomerase family. It depends on Mg(2+) as a cofactor.

It catalyses the reaction (2R)-2,3-dihydroxy-3-methylbutanoate + NADP(+) = (2S)-2-acetolactate + NADPH + H(+). The catalysed reaction is (2R,3R)-2,3-dihydroxy-3-methylpentanoate + NADP(+) = (S)-2-ethyl-2-hydroxy-3-oxobutanoate + NADPH + H(+). It functions in the pathway amino-acid biosynthesis; L-isoleucine biosynthesis; L-isoleucine from 2-oxobutanoate: step 2/4. Its pathway is amino-acid biosynthesis; L-valine biosynthesis; L-valine from pyruvate: step 2/4. Functionally, involved in the biosynthesis of branched-chain amino acids (BCAA). Catalyzes an alkyl-migration followed by a ketol-acid reduction of (S)-2-acetolactate (S2AL) to yield (R)-2,3-dihydroxy-isovalerate. In the isomerase reaction, S2AL is rearranged via a Mg-dependent methyl migration to produce 3-hydroxy-3-methyl-2-ketobutyrate (HMKB). In the reductase reaction, this 2-ketoacid undergoes a metal-dependent reduction by NADPH to yield (R)-2,3-dihydroxy-isovalerate. The sequence is that of Ketol-acid reductoisomerase (NADP(+)) from Trichormus variabilis (strain ATCC 29413 / PCC 7937) (Anabaena variabilis).